The following is a 300-amino-acid chain: MSLNLDAMMTERRNPASAAIDTLSTLDILNLINAEDSKVAPAIARILPQIAQAVDAVSAAFARQGRLIYCGAGTSGRLGILDASECPPTFGTPAGQVIGVIAGGEPAILQAVENAEDNPQAAQDDLQRLALSSRDVVVGIAASGRTPYVLGALRYARGVGATTVALSSNPDSPMAPLADILLTPIVGPEVITGSSRMKAGTAQKMILNMLSSAAMIRSGKVYGNLMVDVEATNAKLVERQIRIVMEAGECDRATAVEALERSQRQCKTAIVMVLSGLSATEAQALLERHRGFIRPALDER.

The region spanning 57–220 (VSAAFARQGR…SSAAMIRSGK (164 aa)) is the SIS domain. Glutamate 85 functions as the Proton donor in the catalytic mechanism. Residue glutamate 116 is part of the active site.

It belongs to the GCKR-like family. MurNAc-6-P etherase subfamily. In terms of assembly, homodimer.

The enzyme catalyses N-acetyl-D-muramate 6-phosphate + H2O = N-acetyl-D-glucosamine 6-phosphate + (R)-lactate. It participates in amino-sugar metabolism; N-acetylmuramate degradation. It functions in the pathway amino-sugar metabolism; 1,6-anhydro-N-acetylmuramate degradation. The protein operates within cell wall biogenesis; peptidoglycan recycling. Its function is as follows. Specifically catalyzes the cleavage of the D-lactyl ether substituent of MurNAc 6-phosphate, producing GlcNAc 6-phosphate and D-lactate. Together with AnmK, is also required for the utilization of anhydro-N-acetylmuramic acid (anhMurNAc) either imported from the medium or derived from its own cell wall murein, and thus plays a role in cell wall recycling. This Edwardsiella ictaluri (strain 93-146) protein is N-acetylmuramic acid 6-phosphate etherase.